The sequence spans 369 residues: Choline-phosphate cytidylyltransferase B (369 aa).

The tract at residues 1-27 (MPVVTTDAESETGIPKSLSNEPPSETM) is disordered. CTP contacts are provided by I84, F85, H92, and K122. The phosphocholine site is built by K122 and W151. CTP contacts are provided by H168, D169, Y173, Q195, R196, T197, and I200. The tract at residues 309–369 (RMLQALSPKQ…SMSEGDEDEK (61 aa)) is disordered. S315, S319, S322, S323, S329, S331, and S335 each carry phosphoserine. Over residues 319 to 339 (SPVSSPTRSRSPSRSPSPTFS) the composition is skewed to low complexity. T345 is subject to Phosphothreonine. Phosphoserine occurs at positions 346, 349, 350, 355, 360, and 362. The segment covering 351–362 (PKAASASISSMS) has biased composition (low complexity).

The protein belongs to the cytidylyltransferase family. Homodimer. In terms of processing, phosphorylated. Post-translationally, extensively phosphorylated. Highly expressed in testis, placenta, brain, ovary, liver and fetal lung. In terms of tissue distribution, expressed in brain, liver and fetal lung.

It is found in the cytoplasm. It localises to the endoplasmic reticulum. The enzyme catalyses phosphocholine + CTP + H(+) = CDP-choline + diphosphate. It participates in phospholipid metabolism; phosphatidylcholine biosynthesis; phosphatidylcholine from phosphocholine: step 1/2. In terms of biological role, catalyzes the key rate-limiting step in the CDP-choline pathway for phosphatidylcholine biosynthesis. The polypeptide is Choline-phosphate cytidylyltransferase B (PCYT1B) (Homo sapiens (Human)).